We begin with the raw amino-acid sequence, 379 residues long: Queuine tRNA-ribosyltransferase (379 aa).

Asp93 acts as the Proton acceptor in catalysis. Substrate-binding positions include 93–97, Asp147, Gln191, and Gly218; that span reads DSGGF. The interval 249–255 is RNA binding; sequence GVGKPED. Asp268 acts as the Nucleophile in catalysis. An RNA binding; important for wobble base 34 recognition region spans residues 273-277; sequence TRNAR. Residues Cys306, Cys308, Cys311, and His337 each coordinate Zn(2+).

This sequence belongs to the queuine tRNA-ribosyltransferase family. As to quaternary structure, homodimer. Within each dimer, one monomer is responsible for RNA recognition and catalysis, while the other monomer binds to the replacement base PreQ1. Zn(2+) serves as cofactor.

The catalysed reaction is 7-aminomethyl-7-carbaguanine + guanosine(34) in tRNA = 7-aminomethyl-7-carbaguanosine(34) in tRNA + guanine. Its pathway is tRNA modification; tRNA-queuosine biosynthesis. Catalyzes the base-exchange of a guanine (G) residue with the queuine precursor 7-aminomethyl-7-deazaguanine (PreQ1) at position 34 (anticodon wobble position) in tRNAs with GU(N) anticodons (tRNA-Asp, -Asn, -His and -Tyr). Catalysis occurs through a double-displacement mechanism. The nucleophile active site attacks the C1' of nucleotide 34 to detach the guanine base from the RNA, forming a covalent enzyme-RNA intermediate. The proton acceptor active site deprotonates the incoming PreQ1, allowing a nucleophilic attack on the C1' of the ribose to form the product. After dissociation, two additional enzymatic reactions on the tRNA convert PreQ1 to queuine (Q), resulting in the hypermodified nucleoside queuosine (7-(((4,5-cis-dihydroxy-2-cyclopenten-1-yl)amino)methyl)-7-deazaguanosine). This chain is Queuine tRNA-ribosyltransferase, found in Mannheimia succiniciproducens (strain KCTC 0769BP / MBEL55E).